A 492-amino-acid chain; its full sequence is SH2 domain-containing adapter protein E (492 aa).

4 disordered regions span residues 46-193 (TASE…DKAK), 214-236 (KRTK…EPYD), 260-332 (LDGP…EQPW), and 347-384 (FEGS…KVDP). Residue serine 103 is modified to Phosphoserine. Positions 149–158 (IKVDTQEKNG) are enriched in basic and acidic residues. Low complexity predominate over residues 168-184 (TSSSSSSSSSASSSPSS). 5 stretches are compositionally biased toward basic and acidic residues: residues 214–227 (KRTK…RVGE), 268–285 (ETVK…KDLL), 306–332 (AEVK…EQPW), 349–361 (GSDR…DAGR), and 373–383 (LSDHGDGEKVD). One can recognise an SH2 domain in the interval 393 to 488 (WYHGSISRAE…AEHMTLLHPV (96 aa)).

In terms of tissue distribution, expressed in heart, brain, lung and skeletal muscle.

The protein is SH2 domain-containing adapter protein E (She) of Mus musculus (Mouse).